The sequence spans 264 residues: Indole-3-glycerol phosphate synthase (264 aa).

Belongs to the TrpC family.

The enzyme catalyses 1-(2-carboxyphenylamino)-1-deoxy-D-ribulose 5-phosphate + H(+) = (1S,2R)-1-C-(indol-3-yl)glycerol 3-phosphate + CO2 + H2O. The protein operates within amino-acid biosynthesis; L-tryptophan biosynthesis; L-tryptophan from chorismate: step 4/5. The protein is Indole-3-glycerol phosphate synthase of Xylella fastidiosa (strain 9a5c).